The following is a 166-amino-acid chain: 2-C-methyl-D-erythritol 2,4-cyclodiphosphate synthase (166 aa).

Residues Asp11 and His13 each contribute to the a divalent metal cation site. 4-CDP-2-C-methyl-D-erythritol 2-phosphate-binding positions include 11 to 13 (DVH) and 40 to 41 (HS). A divalent metal cation is bound at residue His48. Residues 62–64 (DLG), 135–138 (TTSD), Phe142, and Arg145 each bind 4-CDP-2-C-methyl-D-erythritol 2-phosphate.

Belongs to the IspF family. In terms of assembly, homotrimer. It depends on a divalent metal cation as a cofactor.

The enzyme catalyses 4-CDP-2-C-methyl-D-erythritol 2-phosphate = 2-C-methyl-D-erythritol 2,4-cyclic diphosphate + CMP. It participates in isoprenoid biosynthesis; isopentenyl diphosphate biosynthesis via DXP pathway; isopentenyl diphosphate from 1-deoxy-D-xylulose 5-phosphate: step 4/6. Involved in the biosynthesis of isopentenyl diphosphate (IPP) and dimethylallyl diphosphate (DMAPP), two major building blocks of isoprenoid compounds. Catalyzes the conversion of 4-diphosphocytidyl-2-C-methyl-D-erythritol 2-phosphate (CDP-ME2P) to 2-C-methyl-D-erythritol 2,4-cyclodiphosphate (ME-CPP) with a corresponding release of cytidine 5-monophosphate (CMP). This Pseudarthrobacter chlorophenolicus (strain ATCC 700700 / DSM 12829 / CIP 107037 / JCM 12360 / KCTC 9906 / NCIMB 13794 / A6) (Arthrobacter chlorophenolicus) protein is 2-C-methyl-D-erythritol 2,4-cyclodiphosphate synthase.